The primary structure comprises 121 residues: CRISPR system Cms protein Csm2 (121 aa).

Belongs to the CRISPR-associated Csm2 family. In terms of assembly, part of the Csm effector complex that includes at least Cas10(1), Csm2(3), Csm3(5), Csm4(1), Csm5(1) and mature crRNA. The Csm complex is elongated and slightly twisted with a maximal length of 215 Angstroms and a diameter of 75-80 Angstroms. It has been modeled to have a central protein filamant of Csm3 subunits along which the dsRNA helix of paired crRNA and target RNA binds. The filament is capped at one end by Cas10 and Csm4 and at the other end by Csm5; ssDNA is thought to bind to the N-terminal HD domain of Cas10. Csm with a precursor crRNA does not include Csm5, while Cas6, the enzyme probably involved in pre-crRNA processing, is found associated with a subset of the Csm complex.

Functionally, CRISPR (clustered regularly interspaced short palindromic repeat) is an adaptive immune system that provides protection against mobile genetic elements (viruses, transposable elements and conjugative plasmids). CRISPR clusters contain spacers, sequences complementary to antecedent mobile elements, and target invading nucleic acids. CRISPR clusters are transcribed and processed into CRISPR RNA (crRNA). The type III-A Csm effector complex binds crRNA and acts as a crRNA-guided RNase, DNase and cyclic oligoadenylate synthase; binding of target RNA cognate to the crRNA is required for all activities. In a heterologous host this Csm effector complex restricts ssRNA phage MS2, suggesting it may target RNA viruses in vivo. Csm functions as a non-specific ssDNase. Base-pairing between crRNA and target RNA to form a ternary Csm complex activates a ssDNase activity; target RNA cleavage suppresses the ssDNase, a temporal control that prevents uncontrolled DNA degradation. Viral RNA transcripts probably tether the Csm complex to the viral genome, recruiting Cas10 ssDNA activity which is able to degrade DNA in the transcription bubble, spatially controlling the DNase activity. Its function is as follows. This subunit may be involved in monitoring complementarity of crRNA and target RNA. This is CRISPR system Cms protein Csm2 from Streptococcus thermophilus.